Here is a 73-residue protein sequence, read N- to C-terminus: Translation initiation factor IF-1 (73 aa).

One can recognise an S1-like domain in the interval M1–K72.

The protein belongs to the IF-1 family. In terms of assembly, component of the 30S ribosomal translation pre-initiation complex which assembles on the 30S ribosome in the order IF-2 and IF-3, IF-1 and N-formylmethionyl-tRNA(fMet); mRNA recruitment can occur at any time during PIC assembly.

It localises to the cytoplasm. Functionally, one of the essential components for the initiation of protein synthesis. Stabilizes the binding of IF-2 and IF-3 on the 30S subunit to which N-formylmethionyl-tRNA(fMet) subsequently binds. Helps modulate mRNA selection, yielding the 30S pre-initiation complex (PIC). Upon addition of the 50S ribosomal subunit IF-1, IF-2 and IF-3 are released leaving the mature 70S translation initiation complex. This is Translation initiation factor IF-1 from Legionella pneumophila (strain Paris).